We begin with the raw amino-acid sequence, 116 residues long: Nucleoid-associated protein MLBr02330 (116 aa).

The interval 96–116 (LTSAMRPTAPPPTPPTYMAGT) is disordered.

The protein belongs to the YbaB/EbfC family. As to quaternary structure, homodimer.

Its subcellular location is the cytoplasm. The protein localises to the nucleoid. Its function is as follows. Binds to DNA and alters its conformation. May be involved in regulation of gene expression, nucleoid organization and DNA protection. The protein is Nucleoid-associated protein MLBr02330 of Mycobacterium leprae (strain Br4923).